We begin with the raw amino-acid sequence, 470 residues long: Tigger transposable element-derived protein 3 (470 aa).

The HTH psq-type domain occupies 3-55 (LNTKKKLHALSLAEKIQVLELLDESKMSQSEVARRFQVSQPQISRICKNKEKL). 2 consecutive DNA-binding regions (H-T-H motif) follow at residues 31–51 (QSEV…ICKN) and 100–130 (PMLL…WKRR). In terms of domain architecture, HTH CENPB-type spans 67–137 (ERKRKRESKY…KRRNNVGFGT (71 aa)). The DDE-1 domain occupies 167–360 (FSPEDVFGCA…VPRQLILSSF (194 aa)). Residues 402 to 421 (DPGPRVCKEETGTEDSGREE) show a composition bias toward basic and acidic residues. A disordered region spans residues 402–426 (DPGPRVCKEETGTEDSGREEDGFEP).

Belongs to the tigger transposable element derived protein family.

The protein resides in the nucleus. In Mus musculus (Mouse), this protein is Tigger transposable element-derived protein 3 (Tigd3).